The primary structure comprises 206 residues: Outer-membrane lipoprotein carrier protein (206 aa).

An N-terminal signal peptide occupies residues 1–21 (MKKLLCAVLLSPLLYSNAVLA).

The protein belongs to the LolA family. As to quaternary structure, monomer.

It is found in the periplasm. In terms of biological role, participates in the translocation of lipoproteins from the inner membrane to the outer membrane. Only forms a complex with a lipoprotein if the residue after the N-terminal Cys is not an aspartate (The Asp acts as a targeting signal to indicate that the lipoprotein should stay in the inner membrane). The sequence is that of Outer-membrane lipoprotein carrier protein from Shewanella oneidensis (strain ATCC 700550 / JCM 31522 / CIP 106686 / LMG 19005 / NCIMB 14063 / MR-1).